The primary structure comprises 553 residues: MVRFGSAASSDNRRRRCWSWYWGGLLLLWAVAETRADLHYATVYWLEAEKSFQVKDLLDKNGDAYGYYNDTVQSTGWGILEIKAGYGSQLVSNEILMYAAGFLEGYLTASRMSDHVANLYHQMIKNVITEQKVKDFMQKQDEWTRQQIKNNKDDPFWRNAGYIIAQLDGLYMGNLEWAKRQKRTPLTKFEISFLNALGDLLDLIPALSPESRNNGFLSMSEISKMYEWDMGHCSALIKVLPGYENIYFAHSSWFTYAATLRIYKHLDFRIIDPQTKTGRASFSSYPGLLASLDDFYILGSGLIMLQTTNSVFNISLLQQVVPESLFAWERVRIANMMADSGKTWAQTFKKQNSGTYNNQYMILDTKKIKLRRSIEDGTLYIIEQVPNLVEYSDQTTILRKGYWPSYNIPFHKVIYNMSGYREYVQKYGLDFSYEMAPRAKIFRRDQGKVIDIESMKRIMRYNNYKKDPYTKHNPCNTICCRQDLYYMTPVPAGCYDSKVADINMAAKFTAYAINGPPVEKGLPIFSWVHFNETTHQGLPESYNFDFVTMKPVL.

A signal peptide spans 1–35; it reads MVRFGSAASSDNRRRRCWSWYWGGLLLLWAVAETR. 4 N-linked (GlcNAc...) asparagine glycosylation sites follow: Asn69, Asn313, Asn416, and Asn531.

This sequence belongs to the phospholipase B-like family. Expressed by the venom gland.

The protein resides in the secreted. Functionally, may cause hemolysis. In Drysdalia coronoides (White-lipped snake), this protein is Phospholipase-B 81.